Reading from the N-terminus, the 317-residue chain is MAELACFCYPHLENDSYKFIPFNNLAIKCMLTAKVDRKDQDKFYNSIIYGIAPPPQFKKRYNTNDNSRGMNYETSMFNKVAVLICEALNSIKVTQSDVANVLSRVVSVRHLENLVLRRENHQDVLFHSKELLLKSVLIAIGHSKEIETTATAEGGEIVFQNAAFTMWKLTYLEHKLMPILDQNFIEYKITVNEDKPISESHVKELIAELRWQYNKFAVITHGKGHYRVVKYSSVANHADRVYATFKSNNKNGNVLEFNLLDQRIIWQNWYAFTSSMKQGNTLDICKKLLFQKMKRESNPFKGLSTDRKMDEVSQIGI.

Residues 107–109 (SVR), K188, and 221–223 (HGK) each bind ATP. The interval 205 to 241 (LIAELRWQYNKFAVITHGKGHYRVVKYSSVANHADRV) is RNA-binding. The active-site For NTPase and RTPase activities is the H225. R227 contributes to the ATP binding site.

The protein belongs to the rotavirus NSP2 family. In terms of assembly, homooctamer. Interacts with VP1; this interaction is weak. Interacts with NSP5; this interaction leads to up-regulation of NSP5 phosphorylation and formation of viral factories. Interacts with host DCP1A, DCP1B, DDX6, EDC4 and EIF2S1/eIF2-alpha; these interactions are probably part of the sequestration of some host SGs and PBs proteins in viral factories. It depends on Mg(2+) as a cofactor.

It is found in the host cytoplasm. Functionally, participates in replication and packaging of the viral genome. Plays a crucial role, together with NSP5, in the formation of virus factories (viroplasms), which are large inclusions in the host cytoplasm where replication intermediates are assembled and viral RNA replication takes place. Displays ssRNA binding, NTPase, RNA triphosphatase (RTPase) and ATP-independent helix-unwinding activities. The unwinding activity may prepare and organize plus-strand RNAs for packaging and replication by removing interfering secondary structures. The RTPase activity plays a role in the removal of the gamma-phosphate from the rotavirus RNA minus strands of dsRNA genome segments. Participates in the selective exclusion of host proteins from stress granules (SG) and P bodies (PB). Also participates in the sequestration of these remodeled organelles in viral factories. The sequence is that of Non-structural protein 2 from Rotavirus A (strain RVA/Cow/United Kingdom/UK/1975/G6P7[5]) (RV-A).